Reading from the N-terminus, the 828-residue chain is Periplasmic nitrate reductase (828 aa).

The tat-type signal signal peptide spans 1 to 31 (MKLSRRSFMKANAVAAAAAAAGLSVPGVARA). Residues 39–95 (IKWDKAPCRFCGTGCGVLVGTQQGRVVACQGDPDAPVNRGLNCIKGYFLPKIMYGKD) enclose the 4Fe-4S Mo/W bis-MGD-type domain. Positions 46, 49, 53, and 81 each coordinate [4Fe-4S] cluster. Mo-bis(molybdopterin guanine dinucleotide)-binding positions include Lys83, Gln150, Asn175, Cys179, 212–219 (WGSNMAEM), 243–247 (STFQH), 262–264 (QSD), Met372, Gln376, Asn482, 508–509 (SD), Lys531, Asp558, and 718–727 (TGRVLEHWHT). Phe794 provides a ligand contact to substrate. Mo-bis(molybdopterin guanine dinucleotide)-binding residues include Asn802 and Lys819.

The protein belongs to the prokaryotic molybdopterin-containing oxidoreductase family. NasA/NapA/NarB subfamily. Component of the periplasmic nitrate reductase NapAB complex composed of NapA and NapB. The cofactor is [4Fe-4S] cluster. Mo-bis(molybdopterin guanine dinucleotide) is required as a cofactor. Post-translationally, predicted to be exported by the Tat system. The position of the signal peptide cleavage has not been experimentally proven.

The protein localises to the periplasm. The catalysed reaction is 2 Fe(II)-[cytochrome] + nitrate + 2 H(+) = 2 Fe(III)-[cytochrome] + nitrite + H2O. Catalytic subunit of the periplasmic nitrate reductase complex NapAB. Receives electrons from NapB and catalyzes the reduction of nitrate to nitrite. The polypeptide is Periplasmic nitrate reductase (Salmonella paratyphi A (strain ATCC 9150 / SARB42)).